A 616-amino-acid chain; its full sequence is E3 ubiquitin-protein ligase DTX4 (616 aa).

WWE domains follow at residues 1 to 78 (MLLA…PVRR) and 79 to 155 (NYYD…RVRR). Disordered regions lie at residues 223–254 (VGKL…PSQV) and 355–387 (PPPV…GKTP). Residues 375-384 (KTTKKQAKKG) show a composition bias toward basic residues. The RING-type; atypical zinc finger occupies 406-465 (CTICMERLTAPSGYKGPQPTVKPDLVGKLSRCGHIYHIYCLVAMYNNGNKDGSLQCPTCK).

This sequence belongs to the Deltex family. Interacts with NLRP4. As to expression, expressed in brain, testis, embryonic fibroblasts and thymocytes.

It is found in the cytoplasm. It catalyses the reaction S-ubiquitinyl-[E2 ubiquitin-conjugating enzyme]-L-cysteine + [acceptor protein]-L-lysine = [E2 ubiquitin-conjugating enzyme]-L-cysteine + N(6)-ubiquitinyl-[acceptor protein]-L-lysine.. Its pathway is protein modification; protein ubiquitination. Its function is as follows. Functions as a ubiquitin ligase protein in vivo, mediating 'Lys48'-linked polyubiquitination and promoting degradation of TBK1, targeting to TBK1 requires interaction with NLRP4. Regulator of Notch signaling, a signaling pathway involved in cell-cell communications that regulates a broad spectrum of cell-fate determinations. The sequence is that of E3 ubiquitin-protein ligase DTX4 (Dtx4) from Mus musculus (Mouse).